The following is a 64-amino-acid chain: Large ribosomal subunit protein bL35 (64 aa).

Belongs to the bacterial ribosomal protein bL35 family.

This chain is Large ribosomal subunit protein bL35, found in Vibrio parahaemolyticus serotype O3:K6 (strain RIMD 2210633).